The primary structure comprises 885 residues: Alanine--tRNA ligase (885 aa).

Zn(2+) contacts are provided by His-571, His-575, Cys-674, and His-678.

Belongs to the class-II aminoacyl-tRNA synthetase family. Requires Zn(2+) as cofactor.

It localises to the cytoplasm. The enzyme catalyses tRNA(Ala) + L-alanine + ATP = L-alanyl-tRNA(Ala) + AMP + diphosphate. Its function is as follows. Catalyzes the attachment of alanine to tRNA(Ala) in a two-step reaction: alanine is first activated by ATP to form Ala-AMP and then transferred to the acceptor end of tRNA(Ala). Also edits incorrectly charged Ser-tRNA(Ala) and Gly-tRNA(Ala) via its editing domain. In Clavibacter sepedonicus (Clavibacter michiganensis subsp. sepedonicus), this protein is Alanine--tRNA ligase.